Here is a 225-residue protein sequence, read N- to C-terminus: ATP-dependent dethiobiotin synthetase BioD 1 (225 aa).

E13–V18 contributes to the ATP binding site. T17 contacts Mg(2+). Residue K38 is part of the active site. S42 contributes to the substrate binding site. ATP-binding positions include D55, E116–G119, N176–D177, P205–L207, and E212. The Mg(2+) site is built by D55 and E116.

Belongs to the dethiobiotin synthetase family. In terms of assembly, homodimer. The cofactor is Mg(2+).

It is found in the cytoplasm. It catalyses the reaction (7R,8S)-7,8-diammoniononanoate + CO2 + ATP = (4R,5S)-dethiobiotin + ADP + phosphate + 3 H(+). It participates in cofactor biosynthesis; biotin biosynthesis; biotin from 7,8-diaminononanoate: step 1/2. Catalyzes a mechanistically unusual reaction, the ATP-dependent insertion of CO2 between the N7 and N8 nitrogen atoms of 7,8-diaminopelargonic acid (DAPA, also called 7,8-diammoniononanoate) to form a ureido ring. The chain is ATP-dependent dethiobiotin synthetase BioD 1 from Escherichia coli O157:H7.